The chain runs to 147 residues: Cytochrome c-type biogenesis protein CcmE (147 aa).

At 1–7 (MTRKQKR) the chain is on the cytoplasmic side. A helical; Signal-anchor for type II membrane protein transmembrane segment spans residues 8–28 (LSVIVGGLAFLGAATGLTFYA). Residues 29-147 (LGQKASYFYM…KGVWQESKSE (119 aa)) are Periplasmic-facing. Residues histidine 122 and tyrosine 126 each contribute to the heme site.

The protein belongs to the CcmE/CycJ family.

It localises to the cell inner membrane. Its function is as follows. Heme chaperone required for the biogenesis of c-type cytochromes. Transiently binds heme delivered by CcmC and transfers the heme to apo-cytochromes in a process facilitated by CcmF and CcmH. This chain is Cytochrome c-type biogenesis protein CcmE, found in Mesorhizobium japonicum (strain LMG 29417 / CECT 9101 / MAFF 303099) (Mesorhizobium loti (strain MAFF 303099)).